A 173-amino-acid polypeptide reads, in one-letter code: Glutamyl-tRNA(Gln) amidotransferase subunit F, mitochondrial (173 aa).

The transit peptide at 1–15 (MSRFMIRAVFFRRYT) directs the protein to the mitochondrion.

This sequence belongs to the GatF family. In terms of assembly, subunit of the heterotrimeric GatFAB amidotransferase (AdT) complex, composed of A, B and F subunits.

It localises to the mitochondrion inner membrane. It catalyses the reaction L-glutamyl-tRNA(Gln) + L-glutamine + ATP + H2O = L-glutaminyl-tRNA(Gln) + L-glutamate + ADP + phosphate + H(+). Functionally, allows the formation of correctly charged Gln-tRNA(Gln) through the transamidation of misacylated Glu-tRNA(Gln) in the mitochondria. The reaction takes place in the presence of glutamine and ATP through an activated gamma-phospho-Glu-tRNA(Gln). Required for proper protein synthesis within the mitochondrion. The chain is Glutamyl-tRNA(Gln) amidotransferase subunit F, mitochondrial from Candida glabrata (strain ATCC 2001 / BCRC 20586 / JCM 3761 / NBRC 0622 / NRRL Y-65 / CBS 138) (Yeast).